The following is a 375-amino-acid chain: Dehydrodolichyl diphosphate synthase complex subunit NUS1 (375 aa).

Residues 1 to 28 are compositionally biased toward basic and acidic residues; the sequence is MPTMIKKDDKAMEPPNEKPHRKIERDDV. Positions 1 to 48 are disordered; it reads MPTMIKKDDKAMEPPNEKPHRKIERDDVPESSNHIPPPESGVLKGGKV. The helical transmembrane segment at 97–119 threads the bilayer; sequence YLFYKFLLVLLYICFGLFRYGQY.

This sequence belongs to the UPP synthase family. As to quaternary structure, forms an active dehydrodolichyl diphosphate synthase complex with either SRT1 or RER2. Requires Mg(2+) as cofactor.

It is found in the endoplasmic reticulum membrane. It localises to the lipid droplet. Its subcellular location is the nucleus membrane. It catalyses the reaction n isopentenyl diphosphate + (2E,6E)-farnesyl diphosphate = a di-trans,poly-cis-polyprenyl diphosphate + n diphosphate. It functions in the pathway protein modification; protein glycosylation. In terms of biological role, with SRT1 or RER2, forms the dehydrodolichyl diphosphate synthase (DDS) complex, an essential component of the dolichol monophosphate (Dol-P) biosynthetic machinery. Adds multiple copies of isopentenyl pyrophosphate (IPP) to farnesyl pyrophosphate (FPP) to produce dehydrodolichyl diphosphate (Dedol-PP), a precursor of dolichol which is utilized as a sugar carrier in protein glycosylation in the endoplasmic reticulum (ER). This is Dehydrodolichyl diphosphate synthase complex subunit NUS1 (NUS1) from Saccharomyces cerevisiae (strain ATCC 204508 / S288c) (Baker's yeast).